A 255-amino-acid chain; its full sequence is 14-3-3 protein 5 (255 aa).

It belongs to the 14-3-3 family. In terms of assembly, homodimer.

This Solanum lycopersicum (Tomato) protein is 14-3-3 protein 5 (TFT5).